The chain runs to 310 residues: Homoserine kinase (310 aa).

91–101 contacts ATP; it reads PIGSGLGSSAC.

It belongs to the GHMP kinase family. Homoserine kinase subfamily.

It is found in the cytoplasm. The catalysed reaction is L-homoserine + ATP = O-phospho-L-homoserine + ADP + H(+). It functions in the pathway amino-acid biosynthesis; L-threonine biosynthesis; L-threonine from L-aspartate: step 4/5. Functionally, catalyzes the ATP-dependent phosphorylation of L-homoserine to L-homoserine phosphate. In Escherichia coli O6:H1 (strain CFT073 / ATCC 700928 / UPEC), this protein is Homoserine kinase.